The following is a 266-amino-acid chain: Putative pyruvate, phosphate dikinase regulatory protein (266 aa).

Position 147 to 154 (147 to 154 (GLSRTSKT)) interacts with ADP.

It belongs to the pyruvate, phosphate/water dikinase regulatory protein family. PDRP subfamily.

It carries out the reaction N(tele)-phospho-L-histidyl/L-threonyl-[pyruvate, phosphate dikinase] + ADP = N(tele)-phospho-L-histidyl/O-phospho-L-threonyl-[pyruvate, phosphate dikinase] + AMP + H(+). It catalyses the reaction N(tele)-phospho-L-histidyl/O-phospho-L-threonyl-[pyruvate, phosphate dikinase] + phosphate + H(+) = N(tele)-phospho-L-histidyl/L-threonyl-[pyruvate, phosphate dikinase] + diphosphate. In terms of biological role, bifunctional serine/threonine kinase and phosphorylase involved in the regulation of the pyruvate, phosphate dikinase (PPDK) by catalyzing its phosphorylation/dephosphorylation. The polypeptide is Putative pyruvate, phosphate dikinase regulatory protein (Clostridium perfringens (strain SM101 / Type A)).